Reading from the N-terminus, the 621-residue chain is Rab11 family-interacting protein 4A (621 aa).

2 EF-hand domains span residues 14-49 and 47-82; these read AFLKKLKEVFDVCDEDADGYIRVEHFVDLGLQFGQG and GQGDEVKKFAKYLDPNAHGRINFKDFCHGVFAIKGC. Ca(2+)-binding residues include aspartate 27, aspartate 29, aspartate 31, tyrosine 33, histidine 38, aspartate 60, asparagine 62, arginine 66, and aspartate 71. 2 disordered regions span residues 132–172 and 203–243; these read YSDE…KEEG and DYGE…GQTP. Residues 151–161 are compositionally biased toward low complexity; the sequence is AADSGAGSESS. A compositionally biased stretch (basic and acidic residues) spans 162 to 172; the sequence is EGGRQDDKEEG. Residues 225–243 are compositionally biased toward polar residues; that stretch reads TNGFSDLGSSLPSSAGQTP. Residues 348 to 556 are a coiled coil; the sequence is DLKSKLKQEN…LNGQILSLSL (209 aa). The 63-residue stretch at 558 to 620 folds into the FIP-RBD domain; that stretch reads EAKNLFACHT…DHNPSILEIK (63 aa).

As to quaternary structure, homodimer. Forms a complex with Rab11 (rab11a or rab11b) and arf6. As to expression, isoform 1 is predominantly expressed in neural tissues. Isoform B is expressed ubiquitously. In the developing retina, it is expressed in progenitors throughout the retina at early stages and becomes restricted to the ganglion cell layer and ciliary marginal zone as differentiation proceeds.

Its subcellular location is the recycling endosome membrane. It localises to the cleavage furrow. The protein localises to the midbody. It is found in the cytoplasmic vesicle. In terms of biological role, acts as a regulator of endocytic traffic by participating in membrane delivery. Required for the abscission step in cytokinesis, possibly by acting as an 'address tag' delivering recycling endosome membranes to the cleavage furrow during late cytokinesis. May play a role in differentiation during retinal development. This chain is Rab11 family-interacting protein 4A (rab11fip4a), found in Danio rerio (Zebrafish).